Reading from the N-terminus, the 289-residue chain is Protease HtpX (289 aa).

2 helical membrane passes run 5 to 25 and 33 to 53; these read IVLF…VMSL and MSGL…ISLL. His-140 is a Zn(2+) binding site. Residue Glu-141 is part of the active site. Zn(2+) is bound at residue His-144. The next 2 helical transmembrane spans lie at 155-175 and 193-213; these read LLQG…GGFI and GIVL…TMWF. Glu-218 is a Zn(2+) binding site.

It belongs to the peptidase M48B family. Zn(2+) serves as cofactor.

The protein localises to the cell inner membrane. The chain is Protease HtpX from Xylella fastidiosa (strain M23).